Here is a 418-residue protein sequence, read N- to C-terminus: Hydroxysteroid dehydrogenase-like protein 2 (418 aa).

Residues 17–23 (GASRGIG), Lys-42, and Asp-74 contribute to the NADP(+) site. Lys-42 is modified (N6-(2-hydroxyisobutyryl)lysine). Lys-116 is modified (N6-acetyllysine). The Proton acceptor role is filled by Tyr-168. Lys-172 lines the NADP(+) pocket. The SCP2 domain maps to 306–415 (RSGAVEETFR…KLEKLMNQMN (110 aa)). Position 318 is an N6-succinyllysine (Lys-318).

This sequence belongs to the short-chain dehydrogenases/reductases (SDR) family. As to expression, ubiquitous.

It is found in the peroxisome. The protein localises to the mitochondrion. Its function is as follows. Has apparently no steroid dehydrogenase activity. Controls bile acid (BA) and lipid metabolism in response to nutritional cues. In Homo sapiens (Human), this protein is Hydroxysteroid dehydrogenase-like protein 2.